We begin with the raw amino-acid sequence, 373 residues long: Muscleblind-like protein 2 (373 aa).

4 C3H1-type zinc fingers span residues Trp13–Lys41, Asn47–Thr73, Thr176–Asp204, and Asp212–Ala238.

Belongs to the muscleblind family. Interacts with ITGA3. Expressed in heart, brain, placenta, lung, liver, skeletal muscle, kidney and pancreas.

Its subcellular location is the nucleus. The protein resides in the cytoplasm. In terms of biological role, mediates pre-mRNA alternative splicing regulation. Acts either as activator or repressor of splicing on specific pre-mRNA targets. Inhibits cardiac troponin-T (TNNT2) pre-mRNA exon inclusion but induces insulin receptor (IR) pre-mRNA exon inclusion in muscle. Antagonizes the alternative splicing activity pattern of CELF proteins. RNA-binding protein that binds to 5'ACACCC-3' core sequence, termed zipcode, within the 3'UTR of ITGA3. Binds to CUG triplet repeat expansion in myotonic dystrophy muscle cells by sequestering the target RNAs. Together with RNA binding proteins RBPMS and RBFOX2, activates vascular smooth muscle cells alternative splicing events. Regulates NCOR2 alternative splicing. Seems to regulate expression and localization of ITGA3 by transporting it from the nucleus to cytoplasm at adhesion plaques. May play a role in myotonic dystrophy pathophysiology (DM). The chain is Muscleblind-like protein 2 (MBNL2) from Homo sapiens (Human).